Reading from the N-terminus, the 96-residue chain is MSAVSKTVDGLVLRLYIQPKASRDSIIGLHGDELKVAITAPPVDGQANAHLVKYLAKQFRVAKSQVVIEKGELGRHKQVKIIEPQQIPTEVAAVTD.

This sequence belongs to the UPF0235 family.

The protein is UPF0235 protein ESA_00387 of Cronobacter sakazakii (strain ATCC BAA-894) (Enterobacter sakazakii).